We begin with the raw amino-acid sequence, 600 residues long: Zinc metalloproteinase-disintegrin-like stejnihagin-B (600 aa).

Positions 1-20 (MIEVLLVTICLAVFPYQGSS) are cleaved as a signal peptide. The propeptide occupies 21–191 (IILESGNVND…KASQLVVTAE (171 aa)). Gln-192 carries the pyrrolidone carboxylic acid modification. One can recognise a Peptidase M12B domain in the interval 198-389 (RYVKLAIVAD…YNPQCILNAL (192 aa)). Asn-261 and Asn-317 each carry an N-linked (GlcNAc...) asparagine glycan. 3 disulfide bridges follow: Cys-306–Cys-384, Cys-346–Cys-368, and Cys-348–Cys-351. His-331 contributes to the Zn(2+) binding site. Residue Glu-332 is part of the active site. The Zn(2+) site is built by His-335 and His-341. Residues 397 to 483 (PPVCGNELLE…DCPTDSFHRN (87 aa)) enclose the Disintegrin domain. Val-399, Asn-402, Leu-404, Glu-406, Glu-409, and Asp-412 together coordinate Ca(2+). Disulfide bonds link Cys-400–Cys-429, Cys-411–Cys-424, Cys-413–Cys-419, Cys-423–Cys-446, Cys-437–Cys-443, Cys-442–Cys-468, Cys-455–Cys-475, Cys-462–Cys-494, Cys-487–Cys-499, Cys-506–Cys-556, Cys-521–Cys-565, Cys-534–Cys-544, Cys-551–Cys-587, and Cys-581–Cys-593. N-linked (GlcNAc...) asparagine glycosylation occurs at Asn-425. A D/ECD-tripeptide motif is present at residues 461 to 463 (ECD). N-linked (GlcNAc...) asparagine glycosylation occurs at Asn-467. N-linked (GlcNAc...) asparagine glycosylation is present at Asn-513.

This sequence belongs to the venom metalloproteinase (M12B) family. P-III subfamily. P-IIIa sub-subfamily. Monomer. The cofactor is Zn(2+). In terms of tissue distribution, expressed by the venom gland.

It is found in the secreted. This metalloproteinase-disintegrin-like impairs hemostasis in the envenomed animal. This Trimeresurus stejnegeri (Chinese green tree viper) protein is Zinc metalloproteinase-disintegrin-like stejnihagin-B.